The sequence spans 249 residues: Putative nicotinamide mononucleotide adenylyltransferase (249 aa).

NAD(+)-binding residues include Ser-40 and Phe-41. An ATP-binding site is contributed by His-48. Residues Thr-97, Gly-129, Asp-131, Arg-165, and Asn-206 each coordinate NAD(+). 214-217 (TRAR) serves as a coordination point for ATP.

Belongs to the eukaryotic NMN adenylyltransferase family. POF1 subfamily.

It is found in the cytoplasm. The protein resides in the nucleus. The enzyme catalyses beta-nicotinamide D-ribonucleotide + ATP + H(+) = diphosphate + NAD(+). It participates in cofactor biosynthesis; NAD(+) biosynthesis; NAD(+) from nicotinamide D-ribonucleotide: step 1/1. In terms of biological role, catalyzes the formation of NAD(+) from nicotinamide mononucleotide (NMN) and ATP. Involved in the salvage pathway for NAD(+) biosynthesis via NMN. This Schizosaccharomyces pombe (strain 972 / ATCC 24843) (Fission yeast) protein is Putative nicotinamide mononucleotide adenylyltransferase.